The chain runs to 170 residues: Cytochrome b6-f complex subunit 4 (170 aa).

The next 3 helical transmembrane spans lie at 36–56 (LLYI…GLAV), 95–115 (LLGV…PFLE), and 131–151 (TVFL…TLPI).

Belongs to the cytochrome b family. PetD subfamily. In terms of assembly, the 4 large subunits of the cytochrome b6-f complex are cytochrome b6, subunit IV (17 kDa polypeptide, petD), cytochrome f and the Rieske protein, while the 4 small subunits are petG, petL, petM and petN. The complex functions as a dimer.

The protein localises to the plastid. Its subcellular location is the chloroplast thylakoid membrane. In terms of biological role, component of the cytochrome b6-f complex, which mediates electron transfer between photosystem II (PSII) and photosystem I (PSI), cyclic electron flow around PSI, and state transitions. This is Cytochrome b6-f complex subunit 4 from Nymphaea alba (White water-lily).